Here is a 196-residue protein sequence, read N- to C-terminus: Vascular-related unknown protein 2 (196 aa).

The tract at residues 84-130 (ANNINTNPKKRRIIHQHKEEEEEELQKGEEEEEDEEDTASSPSNKTK) is disordered. Acidic residues predominate over residues 103–121 (EEEEELQKGEEEEEDEEDT).

Its function is as follows. Involved in the regulation of plant growth. This chain is Vascular-related unknown protein 2, found in Arabidopsis thaliana (Mouse-ear cress).